The sequence spans 489 residues: UDP-N-acetylmuramoylalanine--D-glutamate ligase (489 aa).

126-132 (GTNGKTT) provides a ligand contact to ATP.

Belongs to the MurCDEF family.

The protein localises to the cytoplasm. It carries out the reaction UDP-N-acetyl-alpha-D-muramoyl-L-alanine + D-glutamate + ATP = UDP-N-acetyl-alpha-D-muramoyl-L-alanyl-D-glutamate + ADP + phosphate + H(+). Its pathway is cell wall biogenesis; peptidoglycan biosynthesis. Its function is as follows. Cell wall formation. Catalyzes the addition of glutamate to the nucleotide precursor UDP-N-acetylmuramoyl-L-alanine (UMA). This chain is UDP-N-acetylmuramoylalanine--D-glutamate ligase, found in Mycobacterium avium (strain 104).